A 304-amino-acid polypeptide reads, in one-letter code: tRNA pseudouridine synthase B (304 aa).

Catalysis depends on aspartate 38, which acts as the Nucleophile.

It belongs to the pseudouridine synthase TruB family. Type 1 subfamily.

The enzyme catalyses uridine(55) in tRNA = pseudouridine(55) in tRNA. Responsible for synthesis of pseudouridine from uracil-55 in the psi GC loop of transfer RNAs. The protein is tRNA pseudouridine synthase B of Geobacter sulfurreducens (strain ATCC 51573 / DSM 12127 / PCA).